The sequence spans 506 residues: Catalase (506 aa).

Residues His73 and Asn146 contribute to the active site. Position 356 (Tyr356) interacts with heme. Residues 504 to 506 (SKF) carry the Microbody targeting signal motif.

Belongs to the catalase family. As to quaternary structure, homotetramer. The cofactor is heme.

It is found in the peroxisome matrix. It catalyses the reaction 2 H2O2 = O2 + 2 H2O. Functionally, catalyzes the degradation of hydrogen peroxide (H(2)O(2)) generated by peroxisomal oxidases to water and oxygen, thereby protecting cells from the toxic effects of hydrogen peroxide. The chain is Catalase (Cat) from Drosophila melanogaster (Fruit fly).